Reading from the N-terminus, the 170-residue chain is Adenine phosphoribosyltransferase (170 aa).

The protein belongs to the purine/pyrimidine phosphoribosyltransferase family. As to quaternary structure, homodimer.

The protein resides in the cytoplasm. The enzyme catalyses AMP + diphosphate = 5-phospho-alpha-D-ribose 1-diphosphate + adenine. It functions in the pathway purine metabolism; AMP biosynthesis via salvage pathway; AMP from adenine: step 1/1. Catalyzes a salvage reaction resulting in the formation of AMP, that is energically less costly than de novo synthesis. This is Adenine phosphoribosyltransferase from Bacillus pumilus (strain SAFR-032).